The following is a 393-amino-acid chain: S-adenosylmethionine synthase (393 aa).

Glu9 lines the Mg(2+) pocket. Residue His15 participates in ATP binding. Residue Glu43 coordinates K(+). Residues Glu56 and Gln99 each contribute to the L-methionine site. Residues Asp167–Lys169, Ser235–Phe238, Asp246, Arg252–Lys253, Ala269, Lys273, and Lys277 contribute to the ATP site. Residue Asp246 participates in L-methionine binding. Lys277 is an L-methionine binding site.

It belongs to the AdoMet synthase family. In terms of assembly, homotetramer. Requires Mn(2+) as cofactor. Mg(2+) serves as cofactor. The cofactor is Co(2+). K(+) is required as a cofactor.

Its subcellular location is the cytoplasm. The enzyme catalyses L-methionine + ATP + H2O = S-adenosyl-L-methionine + phosphate + diphosphate. Its pathway is amino-acid biosynthesis; S-adenosyl-L-methionine biosynthesis; S-adenosyl-L-methionine from L-methionine: step 1/1. Catalyzes the formation of S-adenosylmethionine from methionine and ATP. The reaction comprises two steps that are both catalyzed by the same enzyme: formation of S-adenosylmethionine (AdoMet) and triphosphate, and subsequent hydrolysis of the triphosphate. In Brassica rapa subsp. pekinensis (Chinese cabbage), this protein is S-adenosylmethionine synthase (SAMS).